The following is a 366-amino-acid chain: A-type ATP synthase subunit C (366 aa).

Belongs to the V-ATPase V0D/AC39 subunit family. Has multiple subunits with at least A(3), B(3), C, D, E, F, H, I and proteolipid K(x).

The protein localises to the cell membrane. Its function is as follows. Component of the A-type ATP synthase that produces ATP from ADP in the presence of a proton gradient across the membrane. This is A-type ATP synthase subunit C from Thermococcus onnurineus (strain NA1).